Consider the following 291-residue polypeptide: N-acetylmannosamine kinase (291 aa).

ATP is bound by residues 5–12 (AIDIGGTK) and 132–139 (GVGGGVVS). Zn(2+) contacts are provided by histidine 156, cysteine 166, cysteine 168, and cysteine 173.

The protein belongs to the ROK (NagC/XylR) family. NanK subfamily. As to quaternary structure, homodimer.

The catalysed reaction is an N-acyl-D-mannosamine + ATP = an N-acyl-D-mannosamine 6-phosphate + ADP + H(+). Its pathway is amino-sugar metabolism; N-acetylneuraminate degradation; D-fructose 6-phosphate from N-acetylneuraminate: step 2/5. Functionally, catalyzes the phosphorylation of N-acetylmannosamine (ManNAc) to ManNAc-6-P. The protein is N-acetylmannosamine kinase of Escherichia coli (strain SE11).